Consider the following 662-residue polypeptide: MSELLLELFSEEIPAFMQKNAEEGYLNIFTQIFAESAIFAKVQVFVGPRRITLYATHLPKVTLPQEEEIKGPSIESPEAAINGFCSAHNVSKLELSTKLINNQLYYFFVKKTKEREIKEILPKIIIEAINKYSWAKSMFWGDYKIKWIRPLRNILCIFDGEVLPLQFGHLTANNITYGHRLTDNKKLEVTDFKDYRNKLLENNVVLERIKREEIIKTGLLELANSQNLNIKEDARLIEEVAGLSEFPVVLLGKIAQKFLELPKEVLIASMRTHQKYFCLFDKTGNFAPYFLFVSNGRFANAELVIQGNEKVLSARLSDALYFYKQDIAKTLESRLGKLEAVTFHAKLGNLREKIEHITDICNYIAPNNKDLITAAKLCKSDLVSEMVGEFPDLQGIMGYYYAKYEGLNEEIAAAIRDHYKPQGLSDNVASGNAALLALADKLDSLVGLMIAGEAPTGSGDPYALRRQALGIIRIILENKLELNLNDLIIFSLKLYGNSADKDLITSFFEERAKFYFKNKYDILLINAVLDLNLVDTQFKLETLKEFLIEDAGKQLLNAYKRASNIIGDQKITGLVDASLFSTQPEKDLFEVVQKISPQIIDSIADKDYKRALNLLSFLLTPITSFFDNVLVNDPDPKIAQNRLSLLQNICELLNKIAKFNRL.

The protein belongs to the class-II aminoacyl-tRNA synthetase family. In terms of assembly, tetramer of two alpha and two beta subunits.

The protein localises to the cytoplasm. The enzyme catalyses tRNA(Gly) + glycine + ATP = glycyl-tRNA(Gly) + AMP + diphosphate. The polypeptide is Glycine--tRNA ligase beta subunit (Rickettsia akari (strain Hartford)).